A 269-amino-acid chain; its full sequence is Formamidopyrimidine-DNA glycosylase (269 aa).

The Schiff-base intermediate with DNA role is filled by proline 2. The active-site Proton donor is glutamate 3. Catalysis depends on lysine 57, which acts as the Proton donor; for beta-elimination activity. 3 residues coordinate DNA: histidine 90, arginine 109, and lysine 150. An FPG-type zinc finger spans residues 235 to 269 (RVYGRNGEPCRTCGTPIETAKHGQRSTFFCRRCQK). The Proton donor; for delta-elimination activity role is filled by arginine 259.

The protein belongs to the FPG family. In terms of assembly, monomer. It depends on Zn(2+) as a cofactor.

The enzyme catalyses Hydrolysis of DNA containing ring-opened 7-methylguanine residues, releasing 2,6-diamino-4-hydroxy-5-(N-methyl)formamidopyrimidine.. The catalysed reaction is 2'-deoxyribonucleotide-(2'-deoxyribose 5'-phosphate)-2'-deoxyribonucleotide-DNA = a 3'-end 2'-deoxyribonucleotide-(2,3-dehydro-2,3-deoxyribose 5'-phosphate)-DNA + a 5'-end 5'-phospho-2'-deoxyribonucleoside-DNA + H(+). Functionally, involved in base excision repair of DNA damaged by oxidation or by mutagenic agents. Acts as a DNA glycosylase that recognizes and removes damaged bases. Has a preference for oxidized purines, such as 7,8-dihydro-8-oxoguanine (8-oxoG). Has AP (apurinic/apyrimidinic) lyase activity and introduces nicks in the DNA strand. Cleaves the DNA backbone by beta-delta elimination to generate a single-strand break at the site of the removed base with both 3'- and 5'-phosphates. This chain is Formamidopyrimidine-DNA glycosylase, found in Pectobacterium carotovorum subsp. carotovorum (strain PC1).